The primary structure comprises 234 residues: Large ribosomal subunit protein uL1 (234 aa).

This sequence belongs to the universal ribosomal protein uL1 family. Part of the 50S ribosomal subunit.

Binds directly to 23S rRNA. The L1 stalk is quite mobile in the ribosome, and is involved in E site tRNA release. In terms of biological role, protein L1 is also a translational repressor protein, it controls the translation of the L11 operon by binding to its mRNA. This Sulfurovum sp. (strain NBC37-1) protein is Large ribosomal subunit protein uL1.